A 365-amino-acid polypeptide reads, in one-letter code: Carbamoyl phosphate synthase small chain (365 aa).

2 CPSase regions span residues 1-166 (MKRQ…PSPG) and 1-169 (MKRQ…GRGH). Residues serine 45, glycine 218, and glycine 220 each coordinate L-glutamine. Positions 170-357 (RVVLVDFGMK…LTMIENFKKE (188 aa)) constitute a Glutamine amidotransferase type-1 domain. The Nucleophile role is filled by cysteine 245. L-glutamine is bound by residues leucine 246, glutamine 249, asparagine 287, glycine 289, and tyrosine 290. Catalysis depends on residues histidine 330 and glutamate 332.

This sequence belongs to the CarA family. In terms of assembly, composed of two chains; the small (or glutamine) chain promotes the hydrolysis of glutamine to ammonia, which is used by the large (or ammonia) chain to synthesize carbamoyl phosphate. Tetramer of heterodimers (alpha,beta)4.

It catalyses the reaction hydrogencarbonate + L-glutamine + 2 ATP + H2O = carbamoyl phosphate + L-glutamate + 2 ADP + phosphate + 2 H(+). It carries out the reaction L-glutamine + H2O = L-glutamate + NH4(+). It functions in the pathway amino-acid biosynthesis; L-arginine biosynthesis; carbamoyl phosphate from bicarbonate: step 1/1. Its pathway is pyrimidine metabolism; UMP biosynthesis via de novo pathway; (S)-dihydroorotate from bicarbonate: step 1/3. Its function is as follows. Small subunit of the glutamine-dependent carbamoyl phosphate synthetase (CPSase). CPSase catalyzes the formation of carbamoyl phosphate from the ammonia moiety of glutamine, carbonate, and phosphate donated by ATP, constituting the first step of 2 biosynthetic pathways, one leading to arginine and/or urea and the other to pyrimidine nucleotides. The small subunit (glutamine amidotransferase) binds and cleaves glutamine to supply the large subunit with the substrate ammonia. This Bacillus cereus (strain ATCC 10987 / NRS 248) protein is Carbamoyl phosphate synthase small chain.